The chain runs to 569 residues: Aspartokinase 1, chloroplastic (569 aa).

The N-terminal 90 residues, 1 to 90 (MAATRVRCCH…VDEKGITCVM (90 aa)), are a transit peptide targeting the chloroplast. 3 residues coordinate ATP: Lys-91, Gly-94, and Ser-123. Glu-207 is a substrate binding site. 2 consecutive ACT domains span residues 405 to 483 (IAST…AIIS) and 484 to 560 (LIGN…GNGS). Gln-413 and Gly-415 together coordinate L-lysine. Ser-430 contributes to the S-adenosyl-L-methionine binding site. L-lysine is bound by residues Val-431, Asp-432, and Ser-437. The S-adenosyl-L-methionine site is built by Ser-452 and Arg-453.

It belongs to the aspartokinase family. As to quaternary structure, homodimer.

It is found in the plastid. It localises to the chloroplast. It catalyses the reaction L-aspartate + ATP = 4-phospho-L-aspartate + ADP. The protein operates within amino-acid biosynthesis; L-lysine biosynthesis via DAP pathway; (S)-tetrahydrodipicolinate from L-aspartate: step 1/4. It participates in amino-acid biosynthesis; L-methionine biosynthesis via de novo pathway; L-homoserine from L-aspartate: step 1/3. Its pathway is amino-acid biosynthesis; L-threonine biosynthesis; L-threonine from L-aspartate: step 1/5. With respect to regulation, inhibited by S-adenosyl-L-methionine (SAM) and lysine in a synergistic manner. No inhibition by threonine, leucine or SAM alone, and no activation or inhibition by alanine, cysteine, isoleucine, serine, valine, methionine, glutamine, asparagine, glutamic acid or arginine. Involved in the first step of essential amino acids lysine, threonine, methionine and isoleucine synthesis via the aspartate-family pathway. The chain is Aspartokinase 1, chloroplastic (AK1) from Arabidopsis thaliana (Mouse-ear cress).